The chain runs to 1280 residues: SET and MYND domain-containing protein DDB_G0284059 (1280 aa).

Disordered regions lie at residues 1 to 35 (MTKK…SHNH) and 111 to 167 (INKI…QKQQ). Low complexity-rich tracts occupy residues 16–25 (NNNNNNNHGN) and 117–153 (ENSP…QSQP). TPR repeat units lie at residues 272–305 (SKGY…YDME) and 383–416 (HKLY…IEKR). The stretch at 439–468 (QKDEEIEQELDNKNNNSNDDEKQQQQQQQQ) forms a coiled coil. Positions 533, 536, 546, 549, 555, 559, 568, and 572 each coordinate Zn(2+). The MYND-type zinc-finger motif lies at 533 to 572 (CYNCFKEILSPIYCKECSNSQYCSNKCLNEDYVKQHGREC). Disordered regions lie at residues 601–642 (ANKG…QNLN), 659–726 (ALSS…TTTT), 854–905 (QQQQ…PFSP), and 1039–1079 (AKLQ…LNNN). Composition is skewed to low complexity over residues 659 to 697 (ALSS…SLTE), 712 to 726 (SSSS…TTTT), 854 to 898 (QQQQ…QNPP), 1042 to 1053 (QQQQQQQQQHQQ), and 1061 to 1079 (NSNP…LNNN). The SET domain occupies 822–965 (CQLTTYTFAI…KGEEILGCYG (144 aa)). Residues 1218–1251 (GREYSKLGQIYLTLGEIEKSEDAIEKAESILMSW) form a TPR 3 repeat.

This sequence belongs to the class V-like SAM-binding methyltransferase superfamily.

Functionally, probable methyltransferase. The protein is SET and MYND domain-containing protein DDB_G0284059 of Dictyostelium discoideum (Social amoeba).